Here is a 95-residue protein sequence, read N- to C-terminus: Small ribosomal subunit protein uS19 (95 aa).

Belongs to the universal ribosomal protein uS19 family.

In terms of biological role, protein S19 forms a complex with S13 that binds strongly to the 16S ribosomal RNA. This Chloroflexus aurantiacus (strain ATCC 29366 / DSM 635 / J-10-fl) protein is Small ribosomal subunit protein uS19.